We begin with the raw amino-acid sequence, 637 residues long: Poly [ADP-ribose] polymerase 2 (637 aa).

A DNA-binding region spans residues 1–140; that stretch reads MANKLKVDEL…KKEEKIVTAT (140 aa). Residues 2–36 form the SAP 1 domain; the sequence is ANKLKVDELRLKLAERGLSTTGVKAVLVERLEEAI. Residues 35-46 are compositionally biased toward basic and acidic residues; that stretch reads AIAEDTKKEESK. The interval 35-56 is disordered; it reads AIAEDTKKEESKSKRKRNSSND. Positions 41-62 match the Nuclear localization signal motif; it reads KKEESKSKRKRNSSNDTYESNK. Positions 69–103 constitute an SAP 2 domain; that stretch reads FRGMIVKELREEAIKRGLDTTGTKKDLLERLCNDA. Positions 106 to 117 are enriched in polar residues; it reads VSNAPVKSSNGT. The interval 106–134 is disordered; sequence VSNAPVKSSNGTDEAEDDNNGFEEEKKEE. The segment covering 118–127 has biased composition (acidic residues); that stretch reads DEAEDDNNGF. The region spanning 158–255 is the WGR domain; sequence QYHVLQRGDD…KEFIPHPKSY (98 aa). Positions 286 to 404 constitute a PARP alpha-helical domain; sequence QSKLDTRVAK…EIELATKLLS (119 aa). Positions 412 to 637 constitute a PARP catalytic domain; that stretch reads DPLYYHYQQL…VIQVKFNYKH (226 aa).

Belongs to the ARTD/PARP family.

It is found in the nucleus. The catalysed reaction is NAD(+) + (ADP-D-ribosyl)n-acceptor = nicotinamide + (ADP-D-ribosyl)n+1-acceptor + H(+).. It catalyses the reaction L-aspartyl-[protein] + NAD(+) = 4-O-(ADP-D-ribosyl)-L-aspartyl-[protein] + nicotinamide. The enzyme catalyses L-glutamyl-[protein] + NAD(+) = 5-O-(ADP-D-ribosyl)-L-glutamyl-[protein] + nicotinamide. Its function is as follows. Involved in the base excision repair (BER) pathway, by catalyzing the poly(ADP-ribosyl)ation of a limited number of acceptor proteins involved in chromatin architecture and in DNA metabolism. This modification follows DNA damages and appears as an obligatory step in a detection/signaling pathway leading to the reparation of DNA strand breaks. The sequence is that of Poly [ADP-ribose] polymerase 2 (PARP2) from Arabidopsis thaliana (Mouse-ear cress).